Here is a 248-residue protein sequence, read N- to C-terminus: PF03932 family protein CutC (248 aa).

This sequence belongs to the CutC family. In terms of assembly, homodimer.

It is found in the cytoplasm. This chain is PF03932 family protein CutC, found in Escherichia coli O127:H6 (strain E2348/69 / EPEC).